The chain runs to 413 residues: Patatin-like protein 3 (413 aa).

In terms of domain architecture, PNPLA spans 54-245 (LSVDGGARPE…ALGNPTAAAI (192 aa)). Residues 58–61 (GGAR) carry the GGXR motif. The active-site Nucleophile is the S100. Residues 384 to 413 (EHGRRKQHVPPAASGGGGGGLDCHVSKKQP) form a disordered region.

It belongs to the patatin family.

Its function is as follows. Possesses non-specific lipolytic acyl hydrolase (LAH) activity. Hydrolyzes phospholipids as well as galactolipids. May play a role in disease resistance. In Oryza sativa subsp. indica (Rice), this protein is Patatin-like protein 3 (PLP3).